Here is a 1132-residue protein sequence, read N- to C-terminus: APC membrane recruitment protein 1 (1132 aa).

N-acetylmethionine is present on Met-1. Over residues 1-21 the composition is skewed to polar residues; that stretch reads MESQQDEAVQTKGASTSSDAQ. Disordered regions lie at residues 1 to 256, 268 to 301, 338 to 423, 469 to 505, 674 to 699, 736 to 770, 924 to 949, and 1038 to 1132; these read MESQ…ACKN, FMQP…NPPN, SMTD…GEEN, GLGE…DSGE, TSGG…EPDW, MQEA…GNAT, ELQA…DSPL, and SQAS…NLAK. Positions 24 to 35 are enriched in basic and acidic residues; it reads GAEKGAKNKTTE. A compositionally biased stretch (low complexity) spans 121-133; that stretch reads SKSSAQFPSSQSA. Basic and acidic residues-rich tracts occupy residues 195–208, 218–229, and 281–290; these read KELE…HEHV, EIFRDTRKENAK, and EEPHTSETEG. Acidic residues predominate over residues 372–423; that stretch reads ALPDDDDNDDEEEEEEEEEEEEEEEEEEEEEEEEEEEELLEDEEEVKDGEEN. 2 stretches are compositionally biased toward polar residues: residues 475 to 486 and 677 to 696; these read TPQSDQQESAPN and GSQT…SSSE. 2 stretches are compositionally biased toward acidic residues: residues 756–765 and 931–941; these read EEPEEEEEEK and DSDEEGEEEEG. Composition is skewed to polar residues over residues 1059–1072 and 1115–1132; these read SCSS…QSQA and ASLS…NLAK.

This sequence belongs to the Amer family. In terms of assembly, interacts with CTNNB1, AXIN1, LRP6, KEAP1, APC and BTRC. Interacts with SCF (SKP1-CUL1-F-box protein) E3 ubiquitin-protein ligase complexes containing BTRC and/or FBXW11. Identified in the beta-catenin destruction complex containing CTNNB1, APC, AXIN1 and AXIN2. Interacts with WT1. As to expression, expressed in kidney.

The protein resides in the cytoplasm. The protein localises to the cell membrane. It is found in the nucleus. Functionally, regulator of the canonical Wnt signaling pathway. Acts by specifically binding phosphatidylinositol 4,5-bisphosphate (PtdIns(4,5)P2), translocating to the cell membrane and interacting with key regulators of the canonical Wnt signaling pathway, such as components of the beta-catenin destruction complex. Acts both as a positive and negative regulator of the Wnt signaling pathway, depending on the context: acts as a positive regulator by promoting LRP6 phosphorylation. Also acts as a negative regulator by acting as a scaffold protein for the beta-catenin destruction complex and promoting stabilization of Axin at the cell membrane. Promotes CTNNB1 ubiquitination and degradation. Involved in kidney development. The sequence is that of APC membrane recruitment protein 1 (Amer1) from Mus musculus (Mouse).